Reading from the N-terminus, the 503-residue chain is Cobyric acid synthase (503 aa).

Positions 251-450 (DLDIAVIRLP…IHGIFENAAF (200 aa)) constitute a GATase cobBQ-type domain. Residue C331 is the Nucleophile of the active site. H442 is a catalytic residue.

This sequence belongs to the CobB/CobQ family. CobQ subfamily.

It functions in the pathway cofactor biosynthesis; adenosylcobalamin biosynthesis. Its function is as follows. Catalyzes amidations at positions B, D, E, and G on adenosylcobyrinic A,C-diamide. NH(2) groups are provided by glutamine, and one molecule of ATP is hydrogenolyzed for each amidation. The protein is Cobyric acid synthase of Dehalococcoides mccartyi (strain ATCC BAA-2100 / JCM 16839 / KCTC 5957 / BAV1).